The chain runs to 503 residues: Cytochrome P450 3A8 (503 aa).

Cysteine 442 is a heme binding site.

This sequence belongs to the cytochrome P450 family. It depends on heme as a cofactor.

It is found in the endoplasmic reticulum membrane. It localises to the microsome membrane. The catalysed reaction is an organic molecule + reduced [NADPH--hemoprotein reductase] + O2 = an alcohol + oxidized [NADPH--hemoprotein reductase] + H2O + H(+). Its function is as follows. Catalyzes nifedipine and nilvadipine oxidations. The polypeptide is Cytochrome P450 3A8 (CYP3A8) (Macaca fascicularis (Crab-eating macaque)).